Reading from the N-terminus, the 526-residue chain is Ribonuclease Y (526 aa).

The helical transmembrane segment at 10 to 30 threads the bilayer; the sequence is ITFILLIVVGALGGALVGYFI. Residues 216–279 enclose the KH domain; it reads TVTVVEIPNE…EVAKRALTIL (64 aa). One can recognise an HD domain in the interval 342-435; the sequence is VLKHSIEVAF…VAAADALSAA (94 aa).

The protein belongs to the RNase Y family.

It localises to the cell membrane. Its function is as follows. Endoribonuclease that initiates mRNA decay. The sequence is that of Ribonuclease Y from Acholeplasma laidlawii (strain PG-8A).